Here is a 329-residue protein sequence, read N- to C-terminus: Beta-ketoacyl-[acyl-carrier-protein] synthase III (329 aa).

Residues C114 and H255 contribute to the active site. The segment at 256 to 260 (QANQR) is ACP-binding. Residue N285 is part of the active site.

Belongs to the thiolase-like superfamily. FabH family. In terms of assembly, homodimer.

It localises to the cytoplasm. The catalysed reaction is malonyl-[ACP] + acetyl-CoA + H(+) = 3-oxobutanoyl-[ACP] + CO2 + CoA. It participates in lipid metabolism; fatty acid biosynthesis. Its function is as follows. Catalyzes the condensation reaction of fatty acid synthesis by the addition to an acyl acceptor of two carbons from malonyl-ACP. Catalyzes the first condensation reaction which initiates fatty acid synthesis and may therefore play a role in governing the total rate of fatty acid production. Possesses both acetoacetyl-ACP synthase and acetyl transacylase activities. Its substrate specificity determines the biosynthesis of branched-chain and/or straight-chain of fatty acids. The chain is Beta-ketoacyl-[acyl-carrier-protein] synthase III from Thermosynechococcus vestitus (strain NIES-2133 / IAM M-273 / BP-1).